Consider the following 116-residue polypeptide: U16-barytoxin-Tl1f (116 aa).

The signal sequence occupies residues 1–20 (MKTIIVFLSLLVLATKFGDA). A propeptide spanning residues 21–74 (NEGVNQEQMKEVIQNEFREDFLNEMAPMSLLQQLEAIESTLLEKEADRNSRQKR) is cleaved from the precursor. Disulfide bonds link Cys75/Cys90, Cys82/Cys95, and Cys89/Cys110. Asn85 carries an N-linked (GlcNAc...) asparagine glycan.

The protein belongs to the neurotoxin 14 (magi-1) family. 06 (ICK-Trit) subfamily. Expressed by the venom gland.

It is found in the secreted. Ion channel inhibitor. The protein is U16-barytoxin-Tl1f of Trittame loki (Brush-footed trapdoor spider).